We begin with the raw amino-acid sequence, 338 residues long: Glyceraldehyde-3-phosphate dehydrogenase (338 aa).

NAD(+) contacts are provided by residues 11–12 (TI) and Gly-111. Position 140-142 (140-142 (SCN)) interacts with D-glyceraldehyde 3-phosphate. Residue Cys-141 is the Nucleophile of the active site. Arg-169 contributes to the NAD(+) binding site. A disordered region spans residues 170 to 195 (GSDPSEVKKGPINSIVPNPPKVPSHH). 195 to 196 (HG) is a D-glyceraldehyde 3-phosphate binding site. Gln-302 serves as a coordination point for NAD(+).

Belongs to the glyceraldehyde-3-phosphate dehydrogenase family. As to quaternary structure, homotetramer.

Its subcellular location is the cytoplasm. The catalysed reaction is D-glyceraldehyde 3-phosphate + phosphate + NADP(+) = (2R)-3-phospho-glyceroyl phosphate + NADPH + H(+). It catalyses the reaction D-glyceraldehyde 3-phosphate + phosphate + NAD(+) = (2R)-3-phospho-glyceroyl phosphate + NADH + H(+). The protein operates within carbohydrate degradation; glycolysis; pyruvate from D-glyceraldehyde 3-phosphate: step 1/5. This Methanobrevibacter smithii (strain ATCC 35061 / DSM 861 / OCM 144 / PS) protein is Glyceraldehyde-3-phosphate dehydrogenase.